Reading from the N-terminus, the 977-residue chain is uncharacterized protein (977 aa).

The span at 1–24 (MMQQRSGSLSLLSNAVQAGQSSDP) shows a compositional bias: polar residues. The interval 1–65 (MMQQRSGSLS…HEKTKAGKDR (65 aa)) is disordered. The zn(2)-C6 fungal-type DNA-binding region spans 72–99 (CQSCRKKKVKCSGERPSCDQCLKHNIPC). The interval 176–195 (LSHPTIVPSSNSSSLLNSTN) is disordered. Over residues 177–195 (SHPTIVPSSNSSSLLNSTN) the composition is skewed to low complexity. Serine 220 carries the phosphoserine modification. Disordered stretches follow at residues 287–307 (TDSLSIVSNPSQTPAKFDSNR), 357–380 (NSASSGLSTSYTNNNDTTSDNNSL), and 751–774 (HTPINVTNGESQNNSNNDPSANGA). Residues 364–379 (STSYTNNNDTTSDNNS) are compositionally biased toward low complexity. The segment covering 751-770 (HTPINVTNGESQNNSNNDPS) has biased composition (polar residues).

It localises to the cytoplasm. It is found in the nucleus. This is an uncharacterized protein from Schizosaccharomyces pombe (strain 972 / ATCC 24843) (Fission yeast).